The primary structure comprises 276 residues: 2-dehydro-3-deoxyphosphooctonate aldolase (276 aa).

This sequence belongs to the KdsA family.

It is found in the cytoplasm. The catalysed reaction is D-arabinose 5-phosphate + phosphoenolpyruvate + H2O = 3-deoxy-alpha-D-manno-2-octulosonate-8-phosphate + phosphate. The protein operates within carbohydrate biosynthesis; 3-deoxy-D-manno-octulosonate biosynthesis; 3-deoxy-D-manno-octulosonate from D-ribulose 5-phosphate: step 2/3. It participates in bacterial outer membrane biogenesis; lipopolysaccharide biosynthesis. The chain is 2-dehydro-3-deoxyphosphooctonate aldolase from Helicobacter pylori (strain P12).